Here is a 222-residue protein sequence, read N- to C-terminus: Pyridoxal phosphate homeostasis protein (222 aa).

N6-(pyridoxal phosphate)lysine is present on Lys35.

It belongs to the pyridoxal phosphate-binding protein YggS/PROSC family.

Functionally, pyridoxal 5'-phosphate (PLP)-binding protein, which is involved in PLP homeostasis. The sequence is that of Pyridoxal phosphate homeostasis protein from Helicobacter pylori (strain ATCC 700392 / 26695) (Campylobacter pylori).